A 515-amino-acid polypeptide reads, in one-letter code: Hyccin (515 aa).

Over residues 358 to 378 (STSQSALSNSSNTSSKNLLGK) the composition is skewed to low complexity. 2 disordered regions span residues 358–410 (STSQ…TQRA) and 491–515 (TDLP…LSTD). The span at 389–403 (AGREKEGETCREHLS) shows a compositional bias: basic and acidic residues. A compositionally biased stretch (polar residues) spans 498–515 (KQPNQQRPPSISITLSTD).

It belongs to the Hyccin family. As to quaternary structure, component of a phosphatidylinositol 4-kinase (PI4K) complex.

Its subcellular location is the cytoplasm. The protein localises to the cytosol. The protein resides in the cell membrane. In terms of biological role, component of a complex required to localize phosphatidylinositol 4-kinase (PI4K) to the plasma membrane. The complex acts as a regulator of phosphatidylinositol 4-phosphate (PtdIns(4)P) synthesis. In Gallus gallus (Chicken), this protein is Hyccin (HYCC1).